A 362-amino-acid chain; its full sequence is UDP-N-acetylglucosamine--N-acetylmuramyl-(pentapeptide) pyrophosphoryl-undecaprenol N-acetylglucosamine transferase (362 aa).

UDP-N-acetyl-alpha-D-glucosamine is bound by residues 15–17 (TGG), N127, R165, S191, I247, 266–271 (ALTVSE), and Q292.

This sequence belongs to the glycosyltransferase 28 family. MurG subfamily.

It is found in the cell inner membrane. The catalysed reaction is di-trans,octa-cis-undecaprenyl diphospho-N-acetyl-alpha-D-muramoyl-L-alanyl-D-glutamyl-meso-2,6-diaminopimeloyl-D-alanyl-D-alanine + UDP-N-acetyl-alpha-D-glucosamine = di-trans,octa-cis-undecaprenyl diphospho-[N-acetyl-alpha-D-glucosaminyl-(1-&gt;4)]-N-acetyl-alpha-D-muramoyl-L-alanyl-D-glutamyl-meso-2,6-diaminopimeloyl-D-alanyl-D-alanine + UDP + H(+). Its pathway is cell wall biogenesis; peptidoglycan biosynthesis. Its function is as follows. Cell wall formation. Catalyzes the transfer of a GlcNAc subunit on undecaprenyl-pyrophosphoryl-MurNAc-pentapeptide (lipid intermediate I) to form undecaprenyl-pyrophosphoryl-MurNAc-(pentapeptide)GlcNAc (lipid intermediate II). The polypeptide is UDP-N-acetylglucosamine--N-acetylmuramyl-(pentapeptide) pyrophosphoryl-undecaprenol N-acetylglucosamine transferase (Shewanella sp. (strain MR-4)).